Here is a 486-residue protein sequence, read N- to C-terminus: NADH-quinone oxidoreductase subunit N 1 (486 aa).

The next 14 membrane-spanning stretches (helical) occupy residues 15–35, 46–66, 72–92, 111–128, 131–151, 166–186, 208–228, 241–261, 276–296, 303–323, 331–351, 375–395, 410–432, and 455–475; these read FLPE…DPVI, ISLI…GIAG, MLMV…VGIL, YHAL…MAAS, LIMV…LAGY, FLLG…IYGL, FVGI…SAAP, PTPV…AIFL, QPLV…AAIL, MLAY…TAHS, MFYL…VSVL, AAMF…GGFF, IWLT…RILV, and FALI…GWVL.

This sequence belongs to the complex I subunit 2 family. NDH-1 is composed of 14 different subunits. Subunits NuoA, H, J, K, L, M, N constitute the membrane sector of the complex.

Its subcellular location is the cell inner membrane. It carries out the reaction a quinone + NADH + 5 H(+)(in) = a quinol + NAD(+) + 4 H(+)(out). Functionally, NDH-1 shuttles electrons from NADH, via FMN and iron-sulfur (Fe-S) centers, to quinones in the respiratory chain. The immediate electron acceptor for the enzyme in this species is believed to be ubiquinone. Couples the redox reaction to proton translocation (for every two electrons transferred, four hydrogen ions are translocated across the cytoplasmic membrane), and thus conserves the redox energy in a proton gradient. This chain is NADH-quinone oxidoreductase subunit N 1, found in Solibacter usitatus (strain Ellin6076).